Consider the following 272-residue polypeptide: MTKESADKQQSTAENIAVSMQNVTISYGKSAAVKDVFCEISTGKVTAFIGPSGCGKSTLLRSINRMNDLIEGCTLKGRVLFDGVDLYDAAVDPVEVRRRIGMVFQQPNPFPKSIYENVAFGARINGYTGNMDELVERSLRQAAVWDECKDKLKDSGCSLSGGQQQRLCIARTIATQPEVILMDEPCSALDPISTLKIEETMHELKKSFTIVIVTHNMQQAVRVSDETAFFNAETVENRSGKVGYLVEFNDTQSIFNSPQQQATQDYVSGRFG.

Residues 18-257 form the ABC transporter domain; the sequence is VSMQNVTISY…FNDTQSIFNS (240 aa). Position 50–57 (50–57) interacts with ATP; the sequence is GPSGCGKS.

This sequence belongs to the ABC transporter superfamily. Phosphate importer (TC 3.A.1.7) family. The complex is composed of two ATP-binding proteins (PstB), two transmembrane proteins (PstC and PstA) and a solute-binding protein (PstS).

The protein resides in the cell inner membrane. It catalyses the reaction phosphate(out) + ATP + H2O = ADP + 2 phosphate(in) + H(+). Functionally, part of the ABC transporter complex PstSACB involved in phosphate import. Responsible for energy coupling to the transport system. This is Phosphate import ATP-binding protein PstB from Synechococcus sp. (strain CC9902).